We begin with the raw amino-acid sequence, 30 residues long: Cycloviolacin-O9 (30 aa).

The cyclopeptide (Gly-Asn) cross-link spans 1 to 30; sequence GIPCGESCVWIPCLTSAVGCSCKSKVCYRN. Disulfide bonds link Cys4-Cys20, Cys8-Cys22, and Cys13-Cys27.

This is a cyclic peptide.

In terms of biological role, probably participates in a plant defense mechanism. The polypeptide is Cycloviolacin-O9 (Viola odorata (Sweet violet)).